The primary structure comprises 370 residues: Alpha-ketoglutarate-dependent xanthine dioxygenase xanA (370 aa).

H107 contacts substrate. The Fe cation site is built by H149 and D151. Residues T195 and W325 each contribute to the 2-oxoglutarate site. Position 340 (H340) interacts with Fe cation. Residue R352 participates in 2-oxoglutarate binding.

This sequence belongs to the TfdA dioxygenase family. It depends on Fe(2+) as a cofactor. Post-translationally, glycosylated. Is subject to both N- and O-linked glycosylation. In terms of processing, phosphorylated.

The protein localises to the cytoplasm. It is found in the cytosol. The catalysed reaction is xanthine + 2-oxoglutarate + O2 = urate + succinate + CO2. Cu(2+) and Zn(2+) completely inhibit the xanthine dioxygenase activity, whereas Co(2+), Mn(2+), and Ni(2+) partially inhibit the activity. The inactive metal ions are presumed to compete for the Fe(2+)-binding site. N-oxalylglycine (NOG), a known inhibitor of several Fe(2+)/alpha-ketoglutarate-dependent dioxygenase family members, competes with alpha-ketoglutarate and provides a Ki of 0.12 uM for inhibition. 6,8-dihydroxypurine acts as a slow-binding competitive inhibitor. The thiol-specific inhibitors 5,5'-dithiobis(2-nitrobenzoic acid) (DTNB) and iodoacetamide, inhibit also the catalytic activity. Functionally, alpha-ketoglutarate-dependent xanthine dioxygenase is a non-heme mononuclear Fe(2+) enzyme that decarboxylates alpha-ketoglutarate to succinate and CO(2) while hydroxylating xanthine to generate uric acid. Allows xanthine utilization as a nitrogen source. Whereas xanA is highly specific for xanthine, alpha-ketoadipic acid can replace alpha-ketoglutarate as a cosubstrate. Exhibits ferroxidase activity in the absence of substrates. The chain is Alpha-ketoglutarate-dependent xanthine dioxygenase xanA from Emericella nidulans (Aspergillus nidulans).